Consider the following 471-residue polypeptide: Argininosuccinate lyase (471 aa).

Belongs to the lyase 1 family. Argininosuccinate lyase subfamily.

Its subcellular location is the cytoplasm. The enzyme catalyses 2-(N(omega)-L-arginino)succinate = fumarate + L-arginine. The protein operates within amino-acid biosynthesis; L-arginine biosynthesis; L-arginine from L-ornithine and carbamoyl phosphate: step 3/3. This chain is Argininosuccinate lyase, found in Ralstonia nicotianae (strain ATCC BAA-1114 / GMI1000) (Ralstonia solanacearum).